The sequence spans 199 residues: uncharacterized protein (199 aa).

The N-terminal stretch at M1–A23 is a signal peptide.

This is an uncharacterized protein from Escherichia coli (strain K12).